Here is a 245-residue protein sequence, read N- to C-terminus: Acetylglutamate kinase (245 aa).

Substrate is bound by residues 41 to 42 (GG), R63, and N156.

It belongs to the acetylglutamate kinase family. ArgB subfamily.

It localises to the cytoplasm. The catalysed reaction is N-acetyl-L-glutamate + ATP = N-acetyl-L-glutamyl 5-phosphate + ADP. It participates in amino-acid biosynthesis; L-arginine biosynthesis; N(2)-acetyl-L-ornithine from L-glutamate: step 2/4. Functionally, catalyzes the ATP-dependent phosphorylation of N-acetyl-L-glutamate. The chain is Acetylglutamate kinase from Leuconostoc citreum (strain KM20).